A 260-amino-acid polypeptide reads, in one-letter code: MVKFYDKEFGSRLLIGSALYPSASIMQDSIRDSGAEIVTVSLRRETAGGKVGDVFWSLIQKLGVTVLPNTAGCRSVREAVTTAKMARELFATSWIKLEVIADNDTLQPDVVGLVEAATILIKDGFEVFPYCTEDLSVAQRLVDAGCQVIMPWAAPIGSARGIVNRDALKLLRDRLPDITLVVDAGLGAPSHAAEAMELGFDAVLLNTAIAKAEHPAVMAAAFKLAIEGGRLGYEAGLMGPRDFASPSTPVIGTPFWHAVS.

K96 (schiff-base intermediate with DXP) is an active-site residue. 1-deoxy-D-xylulose 5-phosphate-binding positions include G157, 184 to 185 (AG), and 206 to 207 (NT).

This sequence belongs to the ThiG family. Homotetramer. Forms heterodimers with either ThiH or ThiS.

It localises to the cytoplasm. It carries out the reaction [ThiS sulfur-carrier protein]-C-terminal-Gly-aminoethanethioate + 2-iminoacetate + 1-deoxy-D-xylulose 5-phosphate = [ThiS sulfur-carrier protein]-C-terminal Gly-Gly + 2-[(2R,5Z)-2-carboxy-4-methylthiazol-5(2H)-ylidene]ethyl phosphate + 2 H2O + H(+). It participates in cofactor biosynthesis; thiamine diphosphate biosynthesis. In terms of biological role, catalyzes the rearrangement of 1-deoxy-D-xylulose 5-phosphate (DXP) to produce the thiazole phosphate moiety of thiamine. Sulfur is provided by the thiocarboxylate moiety of the carrier protein ThiS. In vitro, sulfur can be provided by H(2)S. This is Thiazole synthase from Rhodopseudomonas palustris (strain BisA53).